The chain runs to 340 residues: Glutaminyl-peptide cyclotransferase (340 aa).

An N-terminal signal peptide occupies residues 1 to 23 (MAIGSVVFAAAGLLLLLLPPSHQ). Residue N42 is glycosylated (N-linked (GlcNAc...) asparagine). 2 residues coordinate alpha-D-mannopyranose: R85 and E91. A disulfide bond links C113 and C136. Zn(2+) is bound at residue D131. Positions 151 and 155 each coordinate alpha-D-mannopyranose. N156 carries an N-linked (GlcNAc...) asparagine glycan. The active-site Proton acceptor is the E170. Position 171 (E171) interacts with Zn(2+). The active-site Proton acceptor is D218. H297 serves as a coordination point for Zn(2+). Residue L306 participates in alpha-D-mannopyranose binding.

The protein belongs to the glutaminyl-peptide cyclotransferase family.

The protein localises to the secreted. It catalyses the reaction N-terminal L-glutaminyl-[peptide] = N-terminal 5-oxo-L-prolyl-[peptide] + NH4(+). Its activity is regulated as follows. Inhibited by imidazoles (imidazole, benzimidazole, 1-benzylimidazole, 1-methylimidazole, P150/03, N-omega-acetylhistamine and 4-methylimidazole) and cysteamines (cysteamine, N-dimethylcysteamine and N-diethylcysteamine). Partially inhibited by PDB50 1(3,4-dimethoxyphenyl)-3-(3-imidazol-1-ylpropyl)thiourea. Its function is as follows. Acts as a glutaminyl-peptide cyclotransferase. Responsible for the biosynthesis of pyroglutamyl peptides. Might be more efficient in the conversion of tri and tetrapeptides in vitro. Might have a relative preference for substrates containing hydrophobic amino acids in vitro. The sequence is that of Glutaminyl-peptide cyclotransferase from Drosophila melanogaster (Fruit fly).